A 395-amino-acid polypeptide reads, in one-letter code: Beta-1,4-galactosyltransferase 3 (395 aa).

Topologically, residues methionine 1 to cysteine 10 are cytoplasmic. The chain crosses the membrane as a helical; Signal-anchor for type II membrane protein span at residues threonine 11 to phenylalanine 31. Over arginine 32–histidine 395 the chain is Lumenal. Asparagine 57 carries an N-linked (GlcNAc...) asparagine glycan. Cysteines 79 and 121 form a disulfide. Residues proline 132 to arginine 136, phenylalanine 171 to arginine 173, valine 198 to aspartate 199, tyrosine 228, and tryptophan 260 each bind UDP-alpha-D-galactose. The cysteines at positions 192 and 211 are disulfide-linked. Position 199 (aspartate 199) interacts with Mn(2+). Residue glycine 262–aspartate 265 participates in N-acetyl-D-glucosamine binding. Histidine 293 serves as a coordination point for Mn(2+). Histidine 293–glycine 295 serves as a coordination point for UDP-alpha-D-galactose. N-acetyl-D-glucosamine is bound at residue arginine 305. N-linked (GlcNAc...) asparagine glycans are attached at residues asparagine 339 and asparagine 387. A disordered region spans residues threonine 341–histidine 395.

The protein belongs to the glycosyltransferase 7 family. Mn(2+) is required as a cofactor.

The protein localises to the golgi apparatus. It is found in the golgi stack membrane. The catalysed reaction is an N-acetyl-beta-D-glucosaminyl derivative + UDP-alpha-D-galactose = a beta-D-galactosyl-(1-&gt;4)-N-acetyl-beta-D-glucosaminyl derivative + UDP + H(+). The enzyme catalyses N-acetyl-D-glucosamine + UDP-alpha-D-galactose = beta-D-galactosyl-(1-&gt;4)-N-acetyl-D-glucosamine + UDP + H(+). It carries out the reaction a beta-D-GlcNAc-(1-&gt;3)-beta-D-Gal-(1-&gt;4)-beta-D-Glc-(1&lt;-&gt;1)-Cer(d18:1(4E)) + UDP-alpha-D-galactose = a neolactoside nLc4Cer(d18:1(4E)) + UDP + H(+). It catalyses the reaction a beta-D-glucosylceramide + UDP-alpha-D-galactose = a beta-D-galactosyl-(1-&gt;4)-beta-D-glucosyl-(1&lt;-&gt;1)-ceramide + UDP + H(+). The catalysed reaction is a neolactoside IV(3)-beta-GlcNAc-nLc4Cer + UDP-alpha-D-galactose = a neolactoside nLc6Cer + UDP + H(+). Its pathway is protein modification; protein glycosylation. Its function is as follows. Responsible for the synthesis of complex-type N-linked oligosaccharides in many glycoproteins as well as the carbohydrate moieties of glycolipids. This is Beta-1,4-galactosyltransferase 3 (B4GALT3) from Cricetulus griseus (Chinese hamster).